An 84-amino-acid chain; its full sequence is Large ribosomal subunit protein bL27 (84 aa).

This sequence belongs to the bacterial ribosomal protein bL27 family.

The sequence is that of Large ribosomal subunit protein bL27 from Buchnera aphidicola subsp. Acyrthosiphon pisum (strain Tuc7).